The following is a 541-amino-acid chain: Atlastin (541 aa).

Over 1-424 the chain is Cytoplasmic; it reads MGGSAVQVIN…NIFKAARTPA (424 aa). The region spanning 35–284 is the GB1/RHD3-type G domain; the sequence is DRFVCVVSVA…LVPMLLAPDN (250 aa). R48, K49, G50, K51, and S52 together coordinate GDP. Residues R48, K49, G50, K51, S52, and F53 each coordinate GTP. S52 contacts Mg(2+). D121 is a binding site for Mg(2+). GDP is bound by residues R192, D193, and V251. GTP-binding residues include R192, D193, and V251. The tract at residues 322–413 is 3HB (three-helix bundle) domain; that stretch reads MLVATAEANH…FTNYQAHNES (92 aa). The interval 414-422 is linker; that stretch reads KNIFKAART. The chain crosses the membrane as a helical span at residues 425-445; the sequence is VYFACAVIMYILSGIFGLVGL. Topologically, residues 446 to 448 are lumenal; that stretch reads YTF. The chain crosses the membrane as a helical span at residues 449-469; that stretch reads ANFCNLVMGVALLTLALWAYI. The Cytoplasmic portion of the chain corresponds to 470 to 541; sequence RYSGELSDFG…NASNGKVKRS (72 aa). T514 is modified (phosphothreonine).

The protein belongs to the TRAFAC class dynamin-like GTPase superfamily. GB1/RHD3 GTPase family. GB1 subfamily. In terms of assembly, monomeric and homodimeric. The homodimer, transiently formed by two molecules on opposing membranes, is the active form mediating ER membrane fusion. Interacts with spas; interaction may regulate microtubule dynamics. In terms of tissue distribution, ubiquitously expressed.

Its subcellular location is the endoplasmic reticulum membrane. It localises to the golgi apparatus membrane. It carries out the reaction GTP + H2O = GDP + phosphate + H(+). Functionally, membrane-anchored GTPase that mediates the GTP-dependent fusion of endoplasmic reticulum (ER) membranes, maintaining the continuous ER network. It facilitates the formation of three-way junctions where ER tubules intersect. Two atlastin-1 on neighboring ER tubules bind GTP and form loose homodimers through the GB1/RHD3-type G domains and 3HB regions. Upon GTP hydrolysis, the 3HB regions tighten, pulling the membranes together to drive their fusion. After fusion, the homodimer disassembles upon release of inorganic phosphate (Pi). Subsequently, GDP dissociates, resetting the monomers to a conformation ready for a new fusion cycle. May also regulate more or less directly Golgi biogenesis. May also regulate microtubule polymerization and Golgi biogenesis. Required for dopaminergic neurons survival and the growth of muscles and synapses at neuromuscular junctions. This chain is Atlastin (atl), found in Drosophila melanogaster (Fruit fly).